We begin with the raw amino-acid sequence, 467 residues long: Ribulose bisphosphate carboxylase large chain (467 aa).

Lysine 5 is subject to N6,N6,N6-trimethyllysine. 2 residues coordinate substrate: asparagine 114 and threonine 164. The Proton acceptor role is filled by lysine 166. Residue lysine 168 participates in substrate binding. Mg(2+)-binding residues include lysine 192, aspartate 194, and glutamate 195. Lysine 192 is subject to N6-carboxylysine. Residue histidine 285 is the Proton acceptor of the active site. The substrate site is built by arginine 286, histidine 318, and serine 370.

It belongs to the RuBisCO large chain family. Type I subfamily. In terms of assembly, heterohexadecamer of 8 large chains and 8 small chains; disulfide-linked. The disulfide link is formed within the large subunit homodimers. The cofactor is Mg(2+). The disulfide bond which can form in the large chain dimeric partners within the hexadecamer appears to be associated with oxidative stress and protein turnover.

The protein localises to the plastid. The protein resides in the chloroplast. It catalyses the reaction 2 (2R)-3-phosphoglycerate + 2 H(+) = D-ribulose 1,5-bisphosphate + CO2 + H2O. The enzyme catalyses D-ribulose 1,5-bisphosphate + O2 = 2-phosphoglycolate + (2R)-3-phosphoglycerate + 2 H(+). Its function is as follows. RuBisCO catalyzes two reactions: the carboxylation of D-ribulose 1,5-bisphosphate, the primary event in carbon dioxide fixation, as well as the oxidative fragmentation of the pentose substrate in the photorespiration process. Both reactions occur simultaneously and in competition at the same active site. The chain is Ribulose bisphosphate carboxylase large chain from Hydrophyllum virginianum (Eastern waterleaf).